A 596-amino-acid chain; its full sequence is MSASNLLPMISSNPAQFAQASLAKAFAPRVAQGQQSVLSFEAMLSTNMLDRIGPLASREDLPPPDAESTLEDLQKDPLALLPPHMRAAIESMDQTPQSAVVIDDHYVAPAPIQSSRITWNGGSLTKPELQIVAVLNRHKDLCPLSWESLEAKANDPSTPPDLKAAIEALLQDPELFYAIGSQGDGRCGGKISAKDLSEFSKHHPQVAAFQESQAQSYAQNYIPSDSAENAQPSVMTENDALRELYRYSEYLPKNLSLADFKQIVDGEAKTGKCPPQVIAAAQYFVSHPEEWKQLYGGNIDKVHKEDFLQVASSSMSLTQAELDTLKTINSHQELFFGSGDLTRDKLASMADDKSLDPKVREAASQLLSDPLLFGLLNNAITGYKTHHGFFDFGGGHTVDSGNVSKEDFGRFYTNMTTANRTVQQPKFHVPETEAAQNAVADMKMGLADQPDIKSPKKNGGALMHVVDSVLRVGSKVLDWAATAVGVLSFIPGIGQVADLVSMTLACEAQAANLLRTAITGGNMKQALIEAGIGVAAQAVGLVSGPGVKLAIRNGLARKAIEEAATAGINLPLSMAQHYAEGYLNDLKARLAADHPA.

It localises to the secreted. The protein is Nodulation outer protein X (nopX) of Sinorhizobium fredii (strain NBRC 101917 / NGR234).